We begin with the raw amino-acid sequence, 199 residues long: Charged multivesicular body protein 1B2 (199 aa).

The stretch at Ala-15–Val-47 forms a coiled coil. The interval Met-132–Met-156 is interaction with IST1. The tract at residues Glu-167 to Val-199 is disordered. Positions Gln-170 to Thr-183 are enriched in polar residues. The interval Gly-174–Val-199 is interaction with SPAST. The stretch at Gly-177 to Val-199 forms a coiled coil. The segment at Val-180 to Arg-196 is interaction with VPS4A, MITD1 and STAMBP. The interval Val-180–Val-199 is interaction with VTA1. The interaction with VPS4B stretch occupies residues Thr-183–Val-199. The MIT-interacting motif motif lies at Asp-186 to Arg-196.

It belongs to the SNF7 family. Probable peripherally associated component of the endosomal sorting required for transport complex III (ESCRT-III). ESCRT-III components are thought to multimerize to form a flat lattice on the perimeter membrane of the endosome. Several assembly forms of ESCRT-III may exist that interact and act sequentially. Interacts with CHMP1A. Interacts with VTA1; the interaction probably involves the open conformation of CHMP1B. Interacts with CHMP2A. Interacts with VPS4A; the interaction is direct. Interacts with VPS4B; the interaction is direct. Interacts with SPAST (via MIT domain); the interaction is direct. Interacts with IST1. Interacts with MITD1. Interacts with STAMBP.

It localises to the cytoplasm. It is found in the cytosol. The protein resides in the endosome. Its subcellular location is the late endosome membrane. Its function is as follows. Probable peripherally associated component of the endosomal sorting required for transport complex III (ESCRT-III) which is involved in multivesicular bodies (MVBs) formation and sorting of endosomal cargo proteins into MVBs. MVBs contain intraluminal vesicles (ILVs) that are generated by invagination and scission from the limiting membrane of the endosome and mostly are delivered to lysosomes enabling degradation of membrane proteins, such as stimulated growth factor receptors, lysosomal enzymes and lipids. The MVB pathway appears to require the sequential function of ESCRT-O, -I,-II and -III complexes. ESCRT-III proteins mostly dissociate from the invaginating membrane before the ILV is released. The ESCRT machinery also functions in topologically equivalent membrane fission events, such as the terminal stages of cytokinesis. ESCRT-III proteins are believed to mediate the necessary vesicle extrusion and/or membrane fission activities, possibly in conjunction with the AAA ATPase VPS4. Involved in cytokinesis. Involved in recruiting VPS4A and/or VPS4B and SPAST to the midbody of dividing cells. In Mus musculus (Mouse), this protein is Charged multivesicular body protein 1B2.